The sequence spans 351 residues: Histidinol-phosphate aminotransferase (351 aa).

Lysine 221 carries the N6-(pyridoxal phosphate)lysine modification.

It belongs to the class-II pyridoxal-phosphate-dependent aminotransferase family. Histidinol-phosphate aminotransferase subfamily. As to quaternary structure, homodimer. Pyridoxal 5'-phosphate serves as cofactor.

The enzyme catalyses L-histidinol phosphate + 2-oxoglutarate = 3-(imidazol-4-yl)-2-oxopropyl phosphate + L-glutamate. Its pathway is amino-acid biosynthesis; L-histidine biosynthesis; L-histidine from 5-phospho-alpha-D-ribose 1-diphosphate: step 7/9. This Staphylococcus epidermidis (strain ATCC 35984 / DSM 28319 / BCRC 17069 / CCUG 31568 / BM 3577 / RP62A) protein is Histidinol-phosphate aminotransferase.